Consider the following 97-residue polypeptide: Defensin-A2 (97 aa).

Residues 1–19 (MRTLSLLLALLFLAAQTLA) form the signal peptide. Positions 20–61 (QPIDEGAEEVITEEPEITETQDPTTIMLIERGIGGDSTDATR) are excised as a propeptide. 3 disulfides stabilise this stretch: Cys-66–Cys-93, Cys-68–Cys-82, and Cys-72–Cys-92. Positions 96-97 (TS) are excised as a propeptide.

The protein belongs to the alpha-defensin family. As to expression, highly expressed in intestine, expressed at lower levels in spleen, and at very low levels in kidney and lung.

It is found in the secreted. Its function is as follows. Has antimicrobial activity. The chain is Defensin-A2 from Ornithorhynchus anatinus (Duckbill platypus).